The sequence spans 721 residues: uncharacterized protein (721 aa).

2 disordered regions span residues 196–291 and 370–513; these read TSMT…VGGP and AGIP…AAEQ. 2 stretches are compositionally biased toward low complexity: residues 202–224 and 232–250; these read SPAG…TSGP and SPFG…SSGP. Composition is skewed to pro residues over residues 264–283 and 379–389; these read PMPP…PPSA and APTPSPAPIAP. Residues 419-429 are compositionally biased toward low complexity; sequence APAGPLPAYGA. Residues 435–446 are compositionally biased toward pro residues; the sequence is VTTPPATPPTPT. The segment covering 470–484 has biased composition (polar residues); it reads VNKSTAPATTQAQPS. Positions 491-505 are enriched in low complexity; the sequence is ASATAAATTGAAAGD.

This is an uncharacterized protein from Mycobacterium tuberculosis (strain ATCC 25618 / H37Rv).